Consider the following 353-residue polypeptide: Photosystem II D2 protein (353 aa).

Position 2 is an N-acetylthreonine (T2). T2 is subject to Phosphothreonine. A helical membrane pass occupies residues 41 to 61; the sequence is CAYFALGGWFTGTTFVTSWYT. H118 lines the chlorophyll a pocket. A helical membrane pass occupies residues 125-141; the sequence is GFMLRQFELARSVQLRP. Q130 and N143 together coordinate pheophytin a. A helical membrane pass occupies residues 153–166; that stretch reads VFVSVFLIYPLGQS. A chlorophyll a-binding site is contributed by H198. A helical transmembrane segment spans residues 208–228; it reads AALLCAIHGATVENTLFEDGD. Positions 215 and 262 each coordinate a plastoquinone. H215 is a Fe cation binding site. Residue H269 participates in Fe cation binding. Residues 279-295 traverse the membrane as a helical segment; that stretch reads GLWMSAIGVVGLALNLR.

This sequence belongs to the reaction center PufL/M/PsbA/D family. PSII is composed of 1 copy each of membrane proteins PsbA, PsbB, PsbC, PsbD, PsbE, PsbF, PsbH, PsbI, PsbJ, PsbK, PsbL, PsbM, PsbT, PsbX, PsbY, PsbZ, Psb30/Ycf12, at least 3 peripheral proteins of the oxygen-evolving complex and a large number of cofactors. It forms dimeric complexes. The D1/D2 heterodimer binds P680, chlorophylls that are the primary electron donor of PSII, and subsequent electron acceptors. It shares a non-heme iron and each subunit binds pheophytin, quinone, additional chlorophylls, carotenoids and lipids. There is also a Cl(-1) ion associated with D1 and D2, which is required for oxygen evolution. The PSII complex binds additional chlorophylls, carotenoids and specific lipids. serves as cofactor.

It is found in the plastid. It localises to the chloroplast thylakoid membrane. The catalysed reaction is 2 a plastoquinone + 4 hnu + 2 H2O = 2 a plastoquinol + O2. In terms of biological role, photosystem II (PSII) is a light-driven water:plastoquinone oxidoreductase that uses light energy to abstract electrons from H(2)O, generating O(2) and a proton gradient subsequently used for ATP formation. It consists of a core antenna complex that captures photons, and an electron transfer chain that converts photonic excitation into a charge separation. The D1/D2 (PsbA/PsbD) reaction center heterodimer binds P680, the primary electron donor of PSII as well as several subsequent electron acceptors. D2 is needed for assembly of a stable PSII complex. This Saccharum hybrid (Sugarcane) protein is Photosystem II D2 protein.